The sequence spans 771 residues: Assimilatory nitrate reductase electron transfer subunit (771 aa).

43-79 is a binding site for FAD; the sequence is YNRILLSSVLQGEASLDDITLNSKDWYDKHGITLYTG. [2Fe-2S] cluster is bound by residues cysteine 414, cysteine 416, cysteine 449, and cysteine 452.

The cofactor is FAD. It depends on [2Fe-2S] cluster as a cofactor.

Its function is as follows. Required for nitrate assimilation. This chain is Assimilatory nitrate reductase electron transfer subunit (nasB), found in Bacillus subtilis (strain 168).